We begin with the raw amino-acid sequence, 561 residues long: Excitatory amino acid transporter 4 (561 aa).

The Cytoplasmic portion of the chain corresponds to 1-52 (MSSHGNSLFLRESGAGGGCLQGLQDSLQQRALRTRLRLQTMTREHVRRFLRR). Serine 2 carries the post-translational modification Phosphoserine. Helical transmembrane passes span 53 to 73 (NAFI…AFAL), 96 to 116 (MLQM…MASL), and 130 to 150 (VYYM…VTII). Residues asparagine 213, asparagine 229, and asparagine 236 are each glycosylated (N-linked (GlcNAc...) asparagine). 3 consecutive transmembrane segments (helical) span residues 259 to 282 (SANG…IGGM), 292 to 319 (FFDS…LFLI), and 341 to 362 (LTVI…YFLV). An intramembrane region (discontinuously helical) is located at residues 368–398 (FPFIGGILQALITAMGTSSSSATLPITFRCL). L-aspartate is bound at residue 385–387 (SSS). A helical transmembrane segment spans residues 408-434 (ITRFVLPVGATVNMDGTALYEALAAIF). Na(+) contacts are provided by glycine 416, threonine 418, and asparagine 420. L-aspartate contacts are provided by residues threonine 424, 465-469 (IPQAG), aspartate 498, and asparagine 505. The segment at residues 448–481 (ITTISITATAASVGAAGIPQAGLVTMVIVLTSVG) is an intramembrane region (discontinuously helical). Residues 495–516 (WFLDRLRTMTNVLGDSIGAAVI) form a helical membrane-spanning segment. Asparagine 505 and aspartate 509 together coordinate Na(+).

It belongs to the dicarboxylate/amino acid:cation symporter (DAACS) (TC 2.A.23) family. SLC1A6 subfamily. Homotrimer.

The protein resides in the cell membrane. It carries out the reaction K(+)(in) + L-glutamate(out) + 3 Na(+)(out) + H(+)(out) = K(+)(out) + L-glutamate(in) + 3 Na(+)(in) + H(+)(in). The enzyme catalyses K(+)(in) + L-aspartate(out) + 3 Na(+)(out) + H(+)(out) = K(+)(out) + L-aspartate(in) + 3 Na(+)(in) + H(+)(in). It catalyses the reaction D-aspartate(out) + K(+)(in) + 3 Na(+)(out) + H(+)(out) = D-aspartate(in) + K(+)(out) + 3 Na(+)(in) + H(+)(in). In terms of biological role, sodium-dependent, high-affinity amino acid transporter that mediates the uptake of L-glutamate and also L-aspartate and D-aspartate. Functions as a symporter that transports one amino acid molecule together with two or three Na(+) ions and one proton, in parallel with the counter-transport of one K(+) ion. Mediates Cl(-) flux that is not coupled to amino acid transport; this avoids the accumulation of negative charges due to aspartate and Na(+) symport. Plays a redundant role in the rapid removal of released glutamate from the synaptic cleft, which is essential for terminating the postsynaptic action of glutamate. This Rattus norvegicus (Rat) protein is Excitatory amino acid transporter 4 (Slc1a6).